The following is a 385-amino-acid chain: 1-deoxy-D-xylulose 5-phosphate reductoisomerase (385 aa).

Residues Thr10, Gly11, Ser12, Ile13, and Asn124 each contribute to the NADPH site. Lys125 contacts 1-deoxy-D-xylulose 5-phosphate. Glu126 is a binding site for NADPH. Asp150 lines the Mn(2+) pocket. Ser151, Glu152, Ser176, and His199 together coordinate 1-deoxy-D-xylulose 5-phosphate. Glu152 is a Mn(2+) binding site. Gly205 provides a ligand contact to NADPH. 1-deoxy-D-xylulose 5-phosphate is bound by residues Ser212, Asn217, Lys218, and Glu221. Glu221 is a Mn(2+) binding site.

The protein belongs to the DXR family. It depends on Mg(2+) as a cofactor. Requires Mn(2+) as cofactor.

It carries out the reaction 2-C-methyl-D-erythritol 4-phosphate + NADP(+) = 1-deoxy-D-xylulose 5-phosphate + NADPH + H(+). It functions in the pathway isoprenoid biosynthesis; isopentenyl diphosphate biosynthesis via DXP pathway; isopentenyl diphosphate from 1-deoxy-D-xylulose 5-phosphate: step 1/6. Catalyzes the NADPH-dependent rearrangement and reduction of 1-deoxy-D-xylulose-5-phosphate (DXP) to 2-C-methyl-D-erythritol 4-phosphate (MEP). The chain is 1-deoxy-D-xylulose 5-phosphate reductoisomerase from Clostridium botulinum (strain Eklund 17B / Type B).